A 134-amino-acid chain; its full sequence is ATP synthase epsilon chain, chloroplastic (134 aa).

Belongs to the ATPase epsilon chain family. In terms of assembly, F-type ATPases have 2 components, CF(1) - the catalytic core - and CF(0) - the membrane proton channel. CF(1) has five subunits: alpha(3), beta(3), gamma(1), delta(1), epsilon(1). CF(0) has three main subunits: a, b and c.

The protein resides in the plastid. The protein localises to the chloroplast thylakoid membrane. Produces ATP from ADP in the presence of a proton gradient across the membrane. The chain is ATP synthase epsilon chain, chloroplastic from Pyropia yezoensis (Susabi-nori).